The primary structure comprises 1690 residues: DNA-directed RNA polymerase subunit beta' (1690 aa).

Positions 63, 65, 78, and 81 each coordinate Zn(2+). 3 residues coordinate Mg(2+): Asp-753, Asp-755, and Asp-757. Zn(2+) contacts are provided by Cys-1107, Cys-1295, Cys-1302, and Cys-1305.

This sequence belongs to the RNA polymerase beta' chain family. In terms of assembly, the RNAP catalytic core consists of 2 alpha, 1 beta, 1 beta' and 1 omega subunit. When a sigma factor is associated with the core the holoenzyme is formed, which can initiate transcription. The cofactor is Mg(2+). Zn(2+) serves as cofactor.

The catalysed reaction is RNA(n) + a ribonucleoside 5'-triphosphate = RNA(n+1) + diphosphate. Its function is as follows. DNA-dependent RNA polymerase catalyzes the transcription of DNA into RNA using the four ribonucleoside triphosphates as substrates. This Thermotoga neapolitana (strain ATCC 49049 / DSM 4359 / NBRC 107923 / NS-E) protein is DNA-directed RNA polymerase subunit beta'.